The chain runs to 874 residues: Alanine--tRNA ligase (874 aa).

Positions 562, 566, 664, and 668 each coordinate Zn(2+).

Belongs to the class-II aminoacyl-tRNA synthetase family. It depends on Zn(2+) as a cofactor.

The protein resides in the cytoplasm. The catalysed reaction is tRNA(Ala) + L-alanine + ATP = L-alanyl-tRNA(Ala) + AMP + diphosphate. Functionally, catalyzes the attachment of alanine to tRNA(Ala) in a two-step reaction: alanine is first activated by ATP to form Ala-AMP and then transferred to the acceptor end of tRNA(Ala). Also edits incorrectly charged Ser-tRNA(Ala) and Gly-tRNA(Ala) via its editing domain. In Neisseria meningitidis serogroup A / serotype 4A (strain DSM 15465 / Z2491), this protein is Alanine--tRNA ligase.